A 240-amino-acid polypeptide reads, in one-letter code: MDARKRGRPEAAASHNSNGGFKRSKQEMESISTGLGSKSKPCTKFFSTSGCPFGDNCHFLHYVPGGYNAAAQMTNLRPPVSQVSRNMQGSGGPGGRFSGRGDPGSGPVSIFGASTSKISVDASLAGAIIGKGGIHSKQICRETGAKLSIKDHERDPNLKIIELEGTFEQINVASGMVRELIGRLGSVKKPQGIGGPEGKPHPGSNYKTKICDRYSKGNCTYGDRCHFAHGESELRRSGIA.

Disordered regions lie at residues 1–37 and 81–106; these read MDAR…GLGS and SQVS…PGSG. The segment at 36–64 adopts a C3H1-type 1 zinc-finger fold; sequence GSKSKPCTKFFSTSGCPFGDNCHFLHYVP. Positions 89-104 are enriched in gly residues; the sequence is GSGGPGGRFSGRGDPG. In terms of domain architecture, KH spans 113 to 177; sequence ASTSKISVDA…EQINVASGMV (65 aa). A C3H1-type 2 zinc finger spans residues 205-232; it reads NYKTKICDRYSKGNCTYGDRCHFAHGES.

This is Zinc finger CCCH domain-containing protein 52 from Arabidopsis thaliana (Mouse-ear cress).